Here is a 343-residue protein sequence, read N- to C-terminus: LRP2-binding protein (343 aa).

The TPR repeat unit spans residues S58–A91. 6 Sel1-like repeats span residues L92 to S124, Y132 to N167, V172 to S205, L206 to S241, V242 to D273, and A293 to P328.

The protein resides in the cytoplasm. May act as an adapter that regulates LRP2 function. This is LRP2-binding protein (lrp2bp) from Danio rerio (Zebrafish).